A 222-amino-acid polypeptide reads, in one-letter code: uncharacterized protein (222 aa).

An HTH gntR-type domain is found at 8 to 77; it reads AKKGQIIYRY…GNAGYFVAKN (70 aa).

This is an uncharacterized protein from Mycoplasma pneumoniae (strain ATCC 29342 / M129 / Subtype 1) (Mycoplasmoides pneumoniae).